A 322-amino-acid polypeptide reads, in one-letter code: uncharacterized protein (322 aa).

9 helical membrane passes run 5–25 (LISI…IPGI), 37–57 (IGPS…FKET), 71–91 (LPLL…LTSF), 109–129 (MMYV…MPFI), 153–173 (SFKM…LPFV), 189–209 (LFSL…VIMI), 245–265 (LLLI…APDI), 268–288 (PITI…ATFV), and 300–320 (IYPI…FALL).

It localises to the cell membrane. This is an uncharacterized protein from Methanocaldococcus jannaschii (strain ATCC 43067 / DSM 2661 / JAL-1 / JCM 10045 / NBRC 100440) (Methanococcus jannaschii).